A 42-amino-acid polypeptide reads, in one-letter code: F420-non-reducing hydrogenase vhu subunit U (42 aa).

Residues Sec-21 and Cys-24 each contribute to the Ni(2+) site. A non-standard amino acid (selenocysteine) is located at residue Sec-21. The propeptide at Val-28–Asp-42 is removed in mature form.

It belongs to the [NiFe]/[NiFeSe] hydrogenase large subunit family. In terms of assembly, the F420-non-reducing hydrogenase vhu is composed of four subunits; VhuA, VhuD, VhuG and VhuU. The cofactor is Ni(2+).

In Methanopyrus kandleri (strain AV19 / DSM 6324 / JCM 9639 / NBRC 100938), this protein is F420-non-reducing hydrogenase vhu subunit U (vhuU).